A 108-amino-acid polypeptide reads, in one-letter code: Sperm-egg fusion protein LLCFC1 (108 aa).

The first 30 residues, 1 to 30 (MTSLGSQLHRATFLTALLLLLLLQVKGVKT), serve as a signal peptide directing secretion. A compositionally biased stretch (basic and acidic residues) spans 39–49 (GDKSQKDKVSS). Positions 39-64 (GDKSQKDKVSSEDQGEEEYEEHFEAS) are disordered.

As to expression, detected in testicular germ cells and spermatozoa (at protein level). Abundantly expressed in testis.

Its subcellular location is the secreted. Functionally, sperm protein required for fusion of sperm with the egg membrane during fertilization. This chain is Sperm-egg fusion protein LLCFC1, found in Mus musculus (Mouse).